The chain runs to 286 residues: Aminoglycoside N(3)-acetyltransferase VIII (286 aa).

Belongs to the antibiotic N-acetyltransferase family.

It carries out the reaction a 2-deoxystreptamine antibiotic + acetyl-CoA = an N(3)-acetyl-2-deoxystreptamine antibiotic + CoA + H(+). In terms of biological role, resistance to neomycin. This chain is Aminoglycoside N(3)-acetyltransferase VIII (aacC8), found in Streptomyces fradiae (Streptomyces roseoflavus).